We begin with the raw amino-acid sequence, 188 residues long: Early nodulin-like protein 5 (188 aa).

A signal peptide spans 1–24 (MDSSKKIIIVMFLVTFYMFSCVSS). A Phytocyanin domain is found at 25-128 (TEFEVGGENG…GQKMIVKVME (104 aa)). Cysteine 82 and cysteine 116 are disulfide-bonded. The segment at 127–157 (METESSTESPPPSSSSSSSSSSSLPASTPKA) is disordered. Over residues 129–155 (TESSTESPPPSSSSSSSSSSSLPASTP) the composition is skewed to low complexity. Serine 170 is lipidated: GPI-anchor amidated serine. Positions 171-188 (SSGFVVSAVLIVSVFGLV) are cleaved as a propeptide — removed in mature form.

The protein belongs to the early nodulin-like (ENODL) family. In terms of tissue distribution, mostly expressed in leaves and flowers, and, to a lower extent, in stems.

The protein resides in the cell membrane. In terms of biological role, may act as a carbohydrate transporter. Mainly required for reproductive functions. This chain is Early nodulin-like protein 5, found in Arabidopsis thaliana (Mouse-ear cress).